Reading from the N-terminus, the 175-residue chain is Small ribosomal subunit protein bS16 (175 aa).

The protein belongs to the bacterial ribosomal protein bS16 family.

The polypeptide is Small ribosomal subunit protein bS16 (Cytophaga hutchinsonii (strain ATCC 33406 / DSM 1761 / CIP 103989 / NBRC 15051 / NCIMB 9469 / D465)).